A 310-amino-acid polypeptide reads, in one-letter code: GMP synthase [glutamine-hydrolyzing] subunit B (310 aa).

The region spanning 1–187 is the GMPS ATP-PPase domain; sequence MSTSSYIDQI…LGLRTDLQPF (187 aa). 27 to 33 provides a ligand contact to ATP; sequence SGGQDSS.

Heterodimer composed of a glutamine amidotransferase subunit (A) and a GMP-binding subunit (B).

The enzyme catalyses XMP + L-glutamine + ATP + H2O = GMP + L-glutamate + AMP + diphosphate + 2 H(+). The protein operates within purine metabolism; GMP biosynthesis; GMP from XMP (L-Gln route): step 1/1. Functionally, catalyzes the synthesis of GMP from XMP. The protein is GMP synthase [glutamine-hydrolyzing] subunit B (guaAB) of Thermoplasma acidophilum (strain ATCC 25905 / DSM 1728 / JCM 9062 / NBRC 15155 / AMRC-C165).